A 247-amino-acid chain; its full sequence is MNHIQGSLIYEGKAKRVFACENPNRVLIEFKNDATAFNAKKRSEIDGKGRLNCKISAALFKLLELNGIPTHFLELQSETFMIADKINVIPLEVVIRNIATGSLCRETPINQGTILNPPLLDYYYKDDELGDPILTERRLKLLDLISTSQIEKIETITKTVNKILKEYFDDLDLLLVDFKLEFGFNSLGEIVIADEISPDNCRFWDKTNSDPKGRILDKDRFRQDLGGVIDAYGEILKRIERDSSNSS.

It belongs to the SAICAR synthetase family.

It catalyses the reaction 5-amino-1-(5-phospho-D-ribosyl)imidazole-4-carboxylate + L-aspartate + ATP = (2S)-2-[5-amino-1-(5-phospho-beta-D-ribosyl)imidazole-4-carboxamido]succinate + ADP + phosphate + 2 H(+). It participates in purine metabolism; IMP biosynthesis via de novo pathway; 5-amino-1-(5-phospho-D-ribosyl)imidazole-4-carboxamide from 5-amino-1-(5-phospho-D-ribosyl)imidazole-4-carboxylate: step 1/2. This is Phosphoribosylaminoimidazole-succinocarboxamide synthase from Prochlorococcus marinus (strain NATL1A).